The sequence spans 868 residues: B-cell receptor CD22 (868 aa).

Residues 1–21 (MRVHYLWLLLILGHVASARYS) form the signal peptide. The Ig-like V-type domain maps to 22–148 (SANDWTVDHP…MEPIHLNVSE (127 aa)). The Extracellular segment spans residues 22-708 (SANDWTVDHP…YYSPETIGKR (687 aa)). 3 disulfide bridges follow: Cys41-Cys177, Cys46-Cys112, and Cys171-Cys235. Asn111 and Asn122 each carry an N-linked (GlcNAc...) asparagine glycan. Arg130 is an N-acetylneuraminate binding site. N-linked (GlcNAc...) asparagine glycans are attached at residues Asn145, Asn174, Asn271, Asn281, Asn384, Asn414, Asn466, Asn567, and Asn595. Ig-like C2-type domains lie at 153–250 (PYIQ…RTVR), 257–347 (PKLE…VELT), 352–435 (PEPS…AKLD), 440–521 (PKAV…VILN), 526–603 (PRDV…ETLS), and 614–697 (PRRL…STLT). 4 disulfide bridges follow: Cys278/Cys330, Cys374/Cys417, Cys463/Cys505, and Cys550/Cys592. Cys637 and Cys680 are oxidised to a cystine. Residues 709-727 (VALGLGFCLTICILAIWGM) form a helical membrane-spanning segment. Residues 728 to 868 (KIQKKWKQNR…EDVDYVTLKH (141 aa)) are Cytoplasmic-facing. The segment covering 738–752 (SQQGLQENSSGQSFF) has biased composition (polar residues). A disordered region spans residues 738-772 (SQQGLQENSSGQSFFVRNKKARRTPLSEGPQSQGC). Residues Ser746, Ser747, and Ser750 each carry the phosphoserine modification. Positions 781 to 786 (VSYAIL) match the ITIM motif 1 motif. Tyr783 bears the Phosphotyrosine mark. The interval 790–812 (ESDTHNTGDAGTPATQAPPPNNS) is disordered. Tyr828, Tyr843, and Tyr863 each carry phosphotyrosine. 2 short sequence motifs (ITIM motif) span residues 841–846 (IHYSEL) and 861–866 (VDYVTL).

The protein belongs to the immunoglobulin superfamily. SIGLEC (sialic acid binding Ig-like lectin) family. In terms of assembly, predominantly monomer of isoform CD22-beta. Also found as heterodimer of isoform CD22-beta and a shorter isoform. Interacts with PTPN6/SHP-1, LYN, SYK, PIK3R1/PIK3R2 and PLCG1 upon phosphorylation. Interacts with GRB2, INPP5D and SHC1 upon phosphorylation. May form a complex with INPP5D/SHIP, GRB2 and SHC1. Phosphorylated on tyrosine residues by LYN. In terms of processing, phosphorylation of Tyr-783 and Tyr-843 are involved in binding to SYK. Phosphorylation of Tyr-828 is involved in binding to GRB2. Phosphorylation of Tyr-863 is involved in binding to SYK, PLCG2 and PIK3R1/PIK3R2. As to expression, B-lymphocytes.

The protein localises to the cell membrane. Its function is as follows. Most highly expressed siglec (sialic acid-binding immunoglobulin-like lectin) on B-cells that plays a role in various aspects of B-cell biology including differentiation, antigen presentation, and trafficking to bone marrow. Binds to alpha 2,6-linked sialic acid residues of surface molecules such as CD22 itself, CD45 and IgM in a cis configuration. Can also bind to ligands on other cells as an adhesion molecule in a trans configuration. Acts as an inhibitory coreceptor on the surface of B-cells and inhibits B-cell receptor induced signaling, characterized by inhibition of the calcium mobilization and cellular activation. Mechanistically, the immunoreceptor tyrosine-based inhibitory motif domain is phosphorylated by the Src kinase LYN, which in turn leads to the recruitment of the protein tyrosine phosphatase 1/PTPN6, leading to the negative regulation of BCR signaling. If this negative signaling from is of sufficient strength, apoptosis of the B-cell can be induced. The polypeptide is B-cell receptor CD22 (Mus musculus (Mouse)).